The sequence spans 411 residues: Indian hedgehog protein (411 aa).

An N-terminal signal peptide occupies residues 1-27; that stretch reads MSPARLRPRLHFCLVLLLLLVVPAAWG. The N-palmitoyl cysteine moiety is linked to residue Cys-28. Residues Glu-94, Glu-95, Asp-100, Thr-130, Glu-131, Asp-134, and Asp-136 each contribute to the Ca(2+) site. Positions 145, 152, and 187 each coordinate Zn(2+). Gly-202 carries Cholesterol glycine ester lipidation. An N-linked (GlcNAc...) asparagine glycan is attached at Asn-282.

It belongs to the hedgehog family. Multimer. In terms of assembly, interacts with BOC and CDON. Interacts with PTCH1. Interacts with glypican GPC3. In terms of processing, cholesterylation is required for N-product targeting to lipid rafts and multimerization. Post-translationally, the C-terminal domain displays an autoproteolysis activity and a cholesterol transferase activity. Both activities result in the cleavage of the full-length protein and covalent attachment of a cholesterol moiety to the C-terminal of the newly generated N-product. The N-product is the active species in both local and long-range signaling, whereas the C-product is degraded in the endoplasmic reticulum. N-palmitoylation by HHAT of N-product is required for indian hedgehog protein N-product multimerization and full activity. Expressed in embryonic lung, and in adult kidney and liver.

The protein resides in the cell membrane. Its subcellular location is the endoplasmic reticulum membrane. It localises to the golgi apparatus membrane. It is found in the secreted. The enzyme catalyses glycyl-L-cysteinyl-[protein] + cholesterol + H(+) = [protein]-C-terminal glycyl cholesterol ester + N-terminal L-cysteinyl-[protein]. Its function is as follows. Plays a role in embryonic morphogenesis; it is involved in the regulation of endochondral skeleton formation, and the development of retinal pigment epithelium (RPE), photoreceptors and periocular tissues. The C-terminal part of the indian hedgehog protein precursor displays an autoproteolysis and a cholesterol transferase activity. Both activities result in the cleavage of the full-length protein into two parts followed by the covalent attachment of a cholesterol moiety to the C-terminal of the newly generated N-product. Both activities occur in the endoplasmic reticulum. Plays a role in hedgehog paracrine signaling. Associated with the very-low-density lipoprotein (VLDL) particles to function as a circulating morphogen for endothelial cell integrity maintenance. In terms of biological role, the dually lipidated indian hedgehog protein N-product is a morphogen which is essential for a variety of patterning events during development. Binds to the patched (PTCH1) receptor, which functions in association with smoothened (SMO), to activate the transcription of target genes. Plays a role in morphogenesis of the skeleton by coordinating growth and differentiation of the endochondral skeleton. Positively regulates PTHLH expression during endochondral bone formation preventing chondrocyte hypertrophy. In contrast, participates in normal chondrocyte proliferation in a PTHLH-independent pathway. The polypeptide is Indian hedgehog protein (Homo sapiens (Human)).